We begin with the raw amino-acid sequence, 217 residues long: MQRFTDFYASMHGGASVTPTGLGYIPMVIEQSGRGERAYDIYSRLLRERLIFLVGPVNDNTANLIVAQLLFLESENPDKDISLYINSPGGSVYAGMAIYDTMQFVKPDVSTLCTGLAASMGAFLLAAGKKGKRFTLPNSRIMIHQPSGGAQGQASDIQIQAREILDLRERLNRILAENTGQPVERIAVDTERDNFMSAEDAVSYGLVDKVLASRSEG.

Catalysis depends on S119, which acts as the Nucleophile. H144 is a catalytic residue.

This sequence belongs to the peptidase S14 family. As to quaternary structure, fourteen ClpP subunits assemble into 2 heptameric rings which stack back to back to give a disk-like structure with a central cavity, resembling the structure of eukaryotic proteasomes.

The protein resides in the cytoplasm. The enzyme catalyses Hydrolysis of proteins to small peptides in the presence of ATP and magnesium. alpha-casein is the usual test substrate. In the absence of ATP, only oligopeptides shorter than five residues are hydrolyzed (such as succinyl-Leu-Tyr-|-NHMec, and Leu-Tyr-Leu-|-Tyr-Trp, in which cleavage of the -Tyr-|-Leu- and -Tyr-|-Trp bonds also occurs).. In terms of biological role, cleaves peptides in various proteins in a process that requires ATP hydrolysis. Has a chymotrypsin-like activity. Plays a major role in the degradation of misfolded proteins. The protein is ATP-dependent Clp protease proteolytic subunit of Bordetella petrii (strain ATCC BAA-461 / DSM 12804 / CCUG 43448).